The following is a 175-amino-acid chain: Protein GrpE (175 aa).

This sequence belongs to the GrpE family. As to quaternary structure, homodimer.

The protein localises to the cytoplasm. Participates actively in the response to hyperosmotic and heat shock by preventing the aggregation of stress-denatured proteins, in association with DnaK and GrpE. It is the nucleotide exchange factor for DnaK and may function as a thermosensor. Unfolded proteins bind initially to DnaJ; upon interaction with the DnaJ-bound protein, DnaK hydrolyzes its bound ATP, resulting in the formation of a stable complex. GrpE releases ADP from DnaK; ATP binding to DnaK triggers the release of the substrate protein, thus completing the reaction cycle. Several rounds of ATP-dependent interactions between DnaJ, DnaK and GrpE are required for fully efficient folding. The sequence is that of Protein GrpE from Thermoplasma acidophilum (strain ATCC 25905 / DSM 1728 / JCM 9062 / NBRC 15155 / AMRC-C165).